A 166-amino-acid chain; its full sequence is Cyclin-dependent kinase 4 inhibitor D (166 aa).

At M1 the chain carries N-acetylmethionine. ANK repeat units follow at residues 41 to 69 (FGKT…SPNV), 73 to 102 (SGTS…DVNV), 106 to 135 (TGAL…LHRR), and 138 to 166 (RGLT…VAPL).

It belongs to the CDKN2 cyclin-dependent kinase inhibitor family. As to quaternary structure, interacts with CDK6.

Its subcellular location is the nucleus. The protein resides in the cytoplasm. Functionally, interacts strongly with CDK4 and CDK6 and inhibits them. This chain is Cyclin-dependent kinase 4 inhibitor D (CDKN2D), found in Homo sapiens (Human).